A 908-amino-acid polypeptide reads, in one-letter code: Auxin response factor 6 (908 aa).

Residues 1–21 (MKLSPSAGGVSDQPPSPPEVA) form a disordered region. Positions 134-236 (FCKTLTASDT…QLLLGIRRAN (103 aa)) form a DNA-binding region, TF-B3. The tract at residues 525 to 556 (NEQKPQLQPQQQQQESHQQQPQHQQMQQQKHL) is disordered. Low complexity predominate over residues 526 to 556 (EQKPQLQPQQQQQESHQQQPQHQQMQQQKHL). In terms of domain architecture, PB1 spans 777–861 (ATFVKVYKSG…SCIKILSPQE (85 aa)).

The protein belongs to the ARF family. In terms of assembly, homodimers and heterodimers.

It is found in the nucleus. Functionally, auxin response factors (ARFs) are transcriptional factors that bind specifically to the DNA sequence 5'-TGTCTC-3' found in the auxin-responsive promoter elements (AuxREs). The protein is Auxin response factor 6 (ARF6) of Oryza sativa subsp. indica (Rice).